A 200-amino-acid polypeptide reads, in one-letter code: Dephospho-CoA kinase (200 aa).

Positions 4 to 200 (VLALTGGIAT…QLLIKIKEEG (197 aa)) constitute a DPCK domain. Residue 12–17 (ATGKST) coordinates ATP.

This sequence belongs to the CoaE family.

The protein localises to the cytoplasm. It catalyses the reaction 3'-dephospho-CoA + ATP = ADP + CoA + H(+). Its pathway is cofactor biosynthesis; coenzyme A biosynthesis; CoA from (R)-pantothenate: step 5/5. Functionally, catalyzes the phosphorylation of the 3'-hydroxyl group of dephosphocoenzyme A to form coenzyme A. The chain is Dephospho-CoA kinase from Lactobacillus acidophilus (strain ATCC 700396 / NCK56 / N2 / NCFM).